Consider the following 4466-residue polypeptide: MGDVVDARLDFISEYILKSYKLKPDKWTKCINVEENKILMLEFLEKADNPQLVFTVNPAGLITPSYEFPSALKNTKAIYFIKKGREPVGKDNIKTNLVYGDLSYTPLEQLSALVDEVLVPLLANPRNHEQWPVVVSQDVLRHVHNLKSSVYVVAGQVKGKTLLPLPVGSEKVETAAGSEEKDDSYDRSLVHAIESVIIDWTHQIRDVLKRDSAQPLLEGLNPGPMVEINFWKAKCENLDCIFQQLRDPKVRKMKELLERTQSSYLPSFNNIERDVEAALTEAQDINIHLKPLVYQIESMDELEFSDLTPRLAPILHTVCLIWSNSDYYNTAPRVIVLLQEICNLLIDLCRTFLDPSEIFKLEPEESLEKVRGALTVLKNWRELYDEHRAKLKDYFKDGKEVKEWEFASPLVFTRMDNFIRRIETIQSLFETNVEFSKLEKTEMGSMKGRMLSQQVEKIHEEFQECAKVFTERPYDGLDPTCQEFLEDYEEFEKKVFDLDRRLGSILCQGFDDCCGLEAAFKMLDCYGPLLDRPVIRNDFECKYPIVLMLYDQELDQSKEIYDEHMRVEEANGNAPLNKNMPDVAGQLKWSAQLRDRISKPMGSLKHMEHPTGVRRILESEDAKVIFQKYEEMLNLLNKYEQKVFENWTKGVDEVCKTNLDQSLITRDDASKLIMVNFDPKLVSVLREVKYLQIRGEETIPESAASIYEKHETLRKYVANLDLTVAWYNKVRKTVLEVEFPLIEGQLADLDTRLRQAEADLNWTSDSVWEYIQETRDQVRDLEKRVQQTKDNVDRIKKIMAEWTKQPLFERKELKKESLLALDDRQDRLKKRYAEITTAGEKIHSLMKENLDLFKAEASSDIWKAYVDYVDDMVIDGFFNCIHCTLTYLLENTDPRHCAAPLFEARLELQVPDMIFNPSLDYGIADGFYDLVEMLISDTYKMASLVNRLAEHNGQEHYQADLEGMDDLSDVRNDLMDRVQTIMTKAQEYRNSFDNYAYLYVDDRKEFMRQFLLYNHVLTTEEIEAHAEDGVPECPPTLDQFKEQVDTYEKIYSEADEIEPEQVFDAWFRVDSKPFKAALLNIIKKWSFMFKQHLIDHVTNSLSELQEFIKVGNSGLTKTVEDGDYNGLVDCMGHLMAVKERQAATDEMFEPIKQTIELLKTYDQEMSEEVHTQLQELPEQWNNTKKIAITIKQQVAPLQANEVAIIRRKCTSFDVRQHEFRERFRKEAPFIFLFDGPYQCLDKCHSEIYEMEEHMAKLQESAGLFEVNMPDYKQLKACRREVRLLKGLWDLIMVVRTSIEDWKTTPWLEINVEQMEMDCKKFAKDIRSLDKEMRAWDAYNGLDATVKNMLTSLRAVSELQNPAIRERHWQQLMAATKVKFTMDKETTLSDLLALNLHNFEDEVRNIVDKAVKEMGMEKVLKELNTTWSSMDFDYEPHSRTGISLLKSNEELIETLEDNQVQLQNLMTSKHIAHFLEEVSGWQKKLSTTDSVITIWFEVQRTWSHLESIFIGSEDIRNQLPEDSKRFDGIDTDFKELAAEMEKTPNVVEATNKARLFDRLEAIQGSLVVCEKALAEYLETKRLAFPRFYFVSSADLLDILSQGNNPTQVQRHLSKLFDNMAKLKFKQDDEGNDTKLALGMYSKEGEYVDFDKECECTGQVEVWLNRVMDTMRSTVRSQFADAVVSYEEKPREQWLYDYPAQVALATTQVWWTTEVNISFARLEEGHENSMKDYNKKQILQLNTLIGLLIGKLTKGDRQKIMTICTIDVHARDVVAMMVLKKVDSAQAFQWLSQLRHRWADDDKHCYANICDAQFKYSYEYLGNTPRLVITPLTDRCYITLTQSLHLVMSGAPAGPAGTGKTETTKDLGRALGIMVYVFNCSEQMDYKSCGNIYKGLAQTGAWGCFDEFNRISVEVLSVVAVQVKCVQDAIRDKKERFNFMGEEISLIPSVGIFITMNPGYAGRTELPENLKALFRPCAMVVPDFELICEIMLVAEGFLEARLLARKFITLYTLCKELLSKQDHYDWGLRAIKSVLVVAGSLKRGDPQRPEDQVLMRALRDFNVPKIVSDDTPVFMGLIGDLFPALDVPRRRDLDFEKVVKQSTLDLKLQAEDSFVLKVVQLEELLAVRHSVFVIGNAGTGKSQVLKVLNKTYSNMKRKPVFIDLNPKAVTNDELFGIINPATREWKDGLFSVIMRDMSNITHDGPKWIVLDGDIDPMWIESLNTVMDDNKVLTLASNERIPLTPSMRLLFEISHLKTATPATVSRAGILYINPSDLGWNPIVTSWIDTREVQSERANLTILFDKYLPTLLDTLRIRFKKIIPIPEQSMVQMLCYLLECLLTPENTPADCPKELYELYFVFASIWAFGGSMFQDQLVDYRVEFSKWWITEFKTIKFPNQGTVFDYYIDQESKKFLPWSEKVPTFELDPEIPMQAVLVHTNETTRVRFFMDLLMERGRPVMLVGNAGLGKSVLVGDKLSNLGEDSMVANVPFNYYTTSEMLQRVLEKPLEKKAGRNYGPPGTKKLVYFIDDMNMPEVDTYGTVQPHTLIRQHMDYKHWYDRAKLTLKEIHKCQYVSCMNPTSGSFTINSRLQRHFCVFALSFPGQDALSTIYNSILSQHLANIAVSNALQKLSPTVVSATLDLHKKVAQSFLPTAIKFHYVFNLRDLSNVFQGLLYSGSDLLKSPIDFARLWMHECQRVYGDKMINDQDIEAFEKLVFEYAKKFFEDVDEEALKAKPNIHCHFATGIGDPKYMPCATWPELNKILVEALDTYNEINAVMNLVLFEDAMQHVCRINRILESPRGNALLVGVGGSGKQSLARLASYISSLEVFQITLRKGYGIPDLKLDLATVCMKAGLKNIGTVFLMTDAQVSDEKFLVLINDLLASGEIPDLFADDEVENIIGGVRNEVKGMGLQDTRENCWKFFIDRLRRQLKTVLCFSPVGTTLRVRSRKFPAVVNCTSIDWFHEWPQEALVSVSKRFLDEVELLKGDIKNSIAEFMAYVHVSVNESSKQYLTNERRYNYTTPKSFLEQIKLYESLLAMKSKELTAKMERLENGLTKLQSTAQQVDDLKAKLASQEVELAQKNEDADKLIQVVGVETEKVSKEKATVDDEEKKVAIINEEVSKKAKDCSEDLAKAEPALLAAQEALNTLNKNNLTELKSFGSPPSAVLKVAAAVMVLLAPNGKIPKDRSWKAAKVVMNKVDAFLDSLINYDEENIHENCQKAIKEYLNDPEFEPEYIKGKSLAAGGLCSWVVNIVKFYNVYCDVEPKRIALQKANDELKAAQDKLALIKAKIAELDANLAELTAQFEKATSDKLKCQQEAEATSRTITLANRLVGGLASENVRWGEAVANFKIQEKTLPGDVLLITAFVSYIGCFTKNYRVDLQDRMWLPFLKSQKDPIPITEGLDVLSMLTDDADIAVWNNEGLPSDRMSTENATILSNCQRWPLMIDPQLQGIKWIKQKYGDELRVIRIGQRGYLDTIENAISSGDTVLIENMEESIDPVLDPVLGRNTIKKGRYIKIGDKEVEYNPEFRLILQTKLANPHYKPEMQAQTTLINFTVTRDGLEDQLLANVVAQERPDLEKLKSDLTKQQNDFKIILKELEDNLLSRLSSAEGNFLGDTALVENLETTKRTAAEISVKVEEAKVTEVKINEARELYRPAAARASLLYFILNDLNKINPIYQFSLKAFNTVFSLSIARAEPCEDVKERVVNLIDCITYSVFIYTTRGLFEADKLIFTTQVAFQVLLMKKEIAQNELDFLLRFPIQVGLTSPVDFLTNSAWGAIKSLSAMEDFRNLDRDIEGSAKRWKKFVESECPEKEKFPQEWKNKSALQKLCMMRALRADRMSYAVRNFIEEKLGSKYVEGRQVEFAKSYEETDPATPVFFILSPGVDPLKDVEALGKKLGFTFDNNNFHNVSLGQGQEIVAEQCMDLAAKEGHWVILQNIHLVAKWLSTLEKKLEQYSIGSHESYRVYMSAEPAGSPESHIIPQGILESSIKITNEPPTGMFANLHKALYNFNQDTLEMCAREAEFKVILFALCYFHAVVCERQKFGPQGWNRSYPFNTGDLTISVNVLYNYLEANSKVPWQDLRYLFGEIMYGGHITDDWDRRLCRTYLEEYMAPEMLDGDLYLAPGFPVPPNSDYKGYHQYIDEILPPESPYLYGLHPNAEIGFLTTESDNLFKVVLELQPRDAGGGGGGGSSREEKIKSLLDEIVEKLPEEFNMMEIMGKVEDRTPYVVVAFQECERMNTLTSEIRRSLKELDLGLKGELTITPDMEDLSNALFLDQIPASWVKRAYPSLFGLSAWYADLLQRIKELEQWTADFALPNVVWLGGFFNPQSFLTAIMQSMARKNEWPLDKMCLQCDVTKKNKEDFSSAPREGSYVHGLFMEGARWDTQTNMIADARLKELAPNMPVIFIKAIPVDKQDTRNIYECPVYKTKQRGPTFVWTFNLKSKEKAAKWTLAGVALLLQV.

The tract at residues 1 to 1813 (MGDVVDARLD…YANICDAQFK (1813 aa)) is stem. 154–161 (AGQVKGKT) provides a ligand contact to ATP. 6 coiled-coil regions span residues 482–502 (QEFL…DRRL), 627–643 (QKYE…EQKV), 734–805 (VLEV…WTKQ), 1036–1056 (TLDQ…EADE), 1306–1337 (WLEI…AWDA), and 1443–1468 (LLKS…MTSK). 4 AAA regions span residues 1814–2035 (YSYE…VLVV), 2095–2316 (KVVK…IRFK), 2422–2669 (ELDP…VFQG), and 2767–3016 (TYNE…ERRY). ATP-binding positions include 1852–1859 (GPAGTGKT), 2133–2140 (GNAGTGKS), 2460–2467 (GNAGLGKS), and 2805–2812 (GVGGSGKQ). 3 coiled-coil regions span residues 3033 to 3134 (SLLA…AKAE), 3263 to 3325 (EPKR…SRTI), and 3573 to 3642 (QERP…EEAK). Residues 3033-3325 (SLLAMKSKEL…QEAEATSRTI (293 aa)) are stalk. 2 AAA regions span residues 3409-3636 (LTDD…EISV) and 3846-4072 (VRNF…VLYN).

Belongs to the dynein heavy chain family. Consists of at least two heavy chains (alpha and beta), three intermediate chains and several light chains.

It is found in the cell projection. It localises to the cilium. The protein localises to the flagellum. Its subcellular location is the cytoplasm. The protein resides in the cytoskeleton. It is found in the flagellum axoneme. Its function is as follows. Force generating protein of eukaryotic cilia and flagella. Produces force towards the minus ends of microtubules. Dynein has ATPase activity; the force-producing power stroke is thought to occur on release of ADP. The polypeptide is Dynein beta chain, ciliary (Heliocidaris crassispina (Sea urchin)).